The sequence spans 99 residues: uncharacterized protein (99 aa).

The first 17 residues, 1 to 17 (MMMNAFFPAMALMVLVG), serve as a signal peptide directing secretion. Residue cysteine 18 is the site of N-palmitoyl cysteine attachment. Cysteine 18 carries the S-diacylglycerol cysteine lipid modification.

The protein localises to the cell membrane. This is an uncharacterized protein from Shigella flexneri.